Consider the following 417-residue polypeptide: Exodeoxyribonuclease 7 large subunit (417 aa).

The protein belongs to the XseA family. In terms of assembly, heterooligomer composed of large and small subunits.

It localises to the cytoplasm. It catalyses the reaction Exonucleolytic cleavage in either 5'- to 3'- or 3'- to 5'-direction to yield nucleoside 5'-phosphates.. Functionally, bidirectionally degrades single-stranded DNA into large acid-insoluble oligonucleotides, which are then degraded further into small acid-soluble oligonucleotides. The sequence is that of Exodeoxyribonuclease 7 large subunit from Lactococcus lactis subsp. lactis (strain IL1403) (Streptococcus lactis).